Here is a 206-residue protein sequence, read N- to C-terminus: GTP cyclohydrolase 1 (206 aa).

Zn(2+) is bound by residues Cys97, His100, and Cys168.

It belongs to the GTP cyclohydrolase I family. In terms of assembly, toroid-shaped homodecamer, composed of two pentamers of five dimers.

It catalyses the reaction GTP + H2O = 7,8-dihydroneopterin 3'-triphosphate + formate + H(+). The protein operates within cofactor biosynthesis; 7,8-dihydroneopterin triphosphate biosynthesis; 7,8-dihydroneopterin triphosphate from GTP: step 1/1. The polypeptide is GTP cyclohydrolase 1 (Chromobacterium violaceum (strain ATCC 12472 / DSM 30191 / JCM 1249 / CCUG 213 / NBRC 12614 / NCIMB 9131 / NCTC 9757 / MK)).